The sequence spans 361 residues: Chorismate synthase (361 aa).

The NADP(+) site is built by Arg48 and Arg54. FMN-binding positions include 125 to 127 (RSS), 238 to 239 (NA), Gly278, 293 to 297 (KPTSS), and Arg319.

It belongs to the chorismate synthase family. As to quaternary structure, homotetramer. FMNH2 is required as a cofactor.

The catalysed reaction is 5-O-(1-carboxyvinyl)-3-phosphoshikimate = chorismate + phosphate. It functions in the pathway metabolic intermediate biosynthesis; chorismate biosynthesis; chorismate from D-erythrose 4-phosphate and phosphoenolpyruvate: step 7/7. Functionally, catalyzes the anti-1,4-elimination of the C-3 phosphate and the C-6 proR hydrogen from 5-enolpyruvylshikimate-3-phosphate (EPSP) to yield chorismate, which is the branch point compound that serves as the starting substrate for the three terminal pathways of aromatic amino acid biosynthesis. This reaction introduces a second double bond into the aromatic ring system. This Cronobacter sakazakii (strain ATCC BAA-894) (Enterobacter sakazakii) protein is Chorismate synthase.